We begin with the raw amino-acid sequence, 383 residues long: Chorismate synthase (383 aa).

NADP(+) is bound by residues R39 and R45. Residues 128-130 (RAS), G291, 306-310 (KPIAT), and R332 each bind FMN.

This sequence belongs to the chorismate synthase family. As to quaternary structure, homotetramer. FMNH2 serves as cofactor.

The enzyme catalyses 5-O-(1-carboxyvinyl)-3-phosphoshikimate = chorismate + phosphate. It participates in metabolic intermediate biosynthesis; chorismate biosynthesis; chorismate from D-erythrose 4-phosphate and phosphoenolpyruvate: step 7/7. Functionally, catalyzes the anti-1,4-elimination of the C-3 phosphate and the C-6 proR hydrogen from 5-enolpyruvylshikimate-3-phosphate (EPSP) to yield chorismate, which is the branch point compound that serves as the starting substrate for the three terminal pathways of aromatic amino acid biosynthesis. This reaction introduces a second double bond into the aromatic ring system. The chain is Chorismate synthase from Thermus thermophilus (strain ATCC 27634 / DSM 579 / HB8).